A 1150-amino-acid chain; its full sequence is Rho-type GTPase-activating protein 1 (1150 aa).

Positions 1–10 (MSQRDAKKDG) are enriched in basic and acidic residues. Residues 1–78 (MSQRDAKKDG…AESRKALPNQ (78 aa)) form a disordered region. Residues 40-62 (TTKNFPHSRHTSTVAGTEGGSSL) show a composition bias toward polar residues. 3 consecutive LIM zinc-binding domains span residues 114-177 (KICA…RRLD), 178-238 (LLCA…LFAA), and 483-546 (DLCY…SSNV). The interval 586–683 (SQRKPLSVDP…SHGGSITGKS (98 aa)) is disordered. Over residues 598–617 (ENVSSTVETAKQAETTASSD) the composition is skewed to polar residues. Positions 642-655 (SNETQSSSNSTETS) are enriched in low complexity. S690 is subject to Phosphoserine. A disordered region spans residues 726–759 (AFRHMPSYTDPSYRKNSGAIYDKNDGTQKGLTPK). In terms of domain architecture, Rho-GAP spans 837-1038 (VPLEILVERN…LLIENFEKFC (202 aa)). 2 disordered regions span residues 1078-1097 (LDERNTPKHTASTKRKRQPI) and 1104-1150 (LTSD…IRDS). Residues 1088–1097 (ASTKRKRQPI) show a composition bias toward basic residues. Polar residues predominate over residues 1104 to 1134 (LTSDVPSGSEVADTNSLSSTTKDEASPNSDA).

The protein resides in the cell tip. Its subcellular location is the nucleus. Its function is as follows. GTPase-activating protein for Rho1. Involved in the F-actin patch localization, cell morphogenesis, regulation of septation, and cell wall synthesis. The chain is Rho-type GTPase-activating protein 1 (rga1) from Schizosaccharomyces pombe (strain 972 / ATCC 24843) (Fission yeast).